The following is a 149-amino-acid chain: Large ribosomal subunit protein eL19 (149 aa).

The tract at residues 46 to 99 (EDGTIEAKTAKGNSRGRARKRQQKRAYGHKKGHGSRKGRSGGRQNEKEDWQSRI) is disordered. Basic residues predominate over residues 59–85 (SRGRARKRQQKRAYGHKKGHGSRKGRS). Over residues 89-99 (QNEKEDWQSRI) the composition is skewed to basic and acidic residues.

It belongs to the eukaryotic ribosomal protein eL19 family. As to quaternary structure, part of the 50S ribosomal subunit.

In terms of biological role, binds to the 23S rRNA. The sequence is that of Large ribosomal subunit protein eL19 from Natronomonas pharaonis (strain ATCC 35678 / DSM 2160 / CIP 103997 / JCM 8858 / NBRC 14720 / NCIMB 2260 / Gabara) (Halobacterium pharaonis).